The chain runs to 256 residues: POU domain class 2-associating factor 1 (256 aa).

Residues 1 to 23 (MLWQKPTAPEQAPAPARPYQGVR) are disordered. The OCA domain maps to 16–38 (ARPYQGVRVKEPVKELLRRKRGH).

The protein belongs to the POU2AF family. Interacts with POU2F1/OCT1 and POU2F2/OCT2; the interaction increases POU2F1 and POU2F2 transactivation activity. Ubiquitinated; mediated by SIAH1 or SIAH2 and leading to its subsequent proteasomal degradation. In terms of tissue distribution, B-cell specific. Detected in mainly in spleen, but also in thymus, periphral blood leukocyte and small intestine.

The protein resides in the nucleus. In terms of biological role, transcriptional coactivator that specifically associates with either POU2F1/OCT1 or POU2F2/OCT2. It boosts the POU2F1/OCT1 mediated promoter activity and to a lesser extent, that of POU2F2/OCT2. It recognizes the POU domains of POU2F1/OCT1 and POU2F2/OCT2. It is essential for the response of B-cells to antigens and required for the formation of germinal centers. Regulates IL6 expression in B cells as POU2F2/OCT2 coactivator. The chain is POU domain class 2-associating factor 1 from Homo sapiens (Human).